The following is a 194-amino-acid chain: Large ribosomal subunit protein eL15 (194 aa).

Positions 164 to 194 (AGRKARGLRRKGRGAEKVRPSLRANFRKKRR) are disordered. Basic residues predominate over residues 166–175 (RKARGLRRKG).

Belongs to the eukaryotic ribosomal protein eL15 family.

The protein is Large ribosomal subunit protein eL15 (rpl15e) of Archaeoglobus fulgidus (strain ATCC 49558 / DSM 4304 / JCM 9628 / NBRC 100126 / VC-16).